The chain runs to 129 residues: Sm-like protein LSM4 (129 aa).

The Sm domain maps to 2 to 75 (LPLSLLKTAQ…IKYLRVPDEV (74 aa)). Over residues 79 to 90 (VQEEKTRTDRKP) the composition is skewed to basic and acidic residues. Residues 79–129 (VQEEKTRTDRKPPGVGRGRGRGVDDGGARGRGRGTSMGKMGGNRGAGRGRG) form a disordered region. The span at 111 to 129 (RGTSMGKMGGNRGAGRGRG) shows a compositional bias: gly residues.

This sequence belongs to the snRNP Sm proteins family. As to quaternary structure, component of the heptameric LSM1-LSM7 complex that forms a seven-membered ring structure with a donut shape. The LSM subunits are arranged in the order LSM1, LSM2, LSM3, LSM6, LSM5, LSM7 and LSM4. LSM4 subunit interacts only with its two neighboring subunits, LSM1A or LSM1B and LSM7. Component of the heptameric LSM2-LSM8 complex that forms a seven-membered ring structure with a donut shape. The LSM subunits are arranged in the order LSM8, LSM2, LSM3, LSM6, LSM5, LSM7 and LSM4. LSM4 subunit interacts only with its two neighboring subunits, LSM8 and LSM7. Post-translationally, methylated by PMRT15/SKB1 in response to salt stress or abscisic acid (ABA) treatment. As to expression, expressed in roots, leaves, stems, flowers and siliques.

The protein resides in the cytoplasm. It localises to the nucleus. Functionally, component of LSM protein complexes, which are involved in RNA processing. Component of the cytoplasmic LSM1-LSM7 complex which is involved in mRNA degradation by promoting decapping and leading to accurate 5'-3' mRNA decay. The cytoplasmic LSM1-LSM7 complex regulates developmental gene expression by the decapping of specific development-related transcripts. Component of the nuclear LSM2-LSM8 complex which is involved splicing nuclear mRNAs. LSM2-LSM8 binds directly to the U6 small nuclear RNAs (snRNAs) and is essential for accurate splicing of selected development-related mRNAs through the stabilization of the spliceosomal U6 snRNA. Plays a critical role in the regulation of development-related gene expression. The polypeptide is Sm-like protein LSM4 (Arabidopsis thaliana (Mouse-ear cress)).